A 335-amino-acid polypeptide reads, in one-letter code: MAKAKIAVNGYGTIGKRVADAVKAQDDMEVVGISKRTPNYEAAVAHQLGYDIYAPAENVGAFEKAGMPAAGSVEEMIEKADLVVDCTPGGVGEKNKPLYEKAGVKAIWQGGESHPIAGFSFNAVSNYEGALGRDLVRVVSCNTTGLCRTITPIDRELGVKKVRAILARRATDPNDIKKGPINAIVLHPVKLPSHHGPDVRSVIPHINITSAALLVPTTLMHLHTVNMEVDTDCTAEDIKKIFSSQSRIRFIGQGITSTAEIMEVARDIKRPRNDMWENCIWPESITVDEKEFYFFQAIHQESIVVPENVDAIRAMMELESDGAKSIEKTNKALGM.

NAD(+)-binding positions include 13-14 (TI) and G111. 140 to 142 (SCN) contributes to the D-glyceraldehyde 3-phosphate binding site. C141 serves as the catalytic Nucleophile. R169 is an NAD(+) binding site. Residues T171 and 195-196 (HG) contribute to the D-glyceraldehyde 3-phosphate site. An NAD(+)-binding site is contributed by Q300.

Belongs to the glyceraldehyde-3-phosphate dehydrogenase family. Homotetramer.

It is found in the cytoplasm. It catalyses the reaction D-glyceraldehyde 3-phosphate + phosphate + NADP(+) = (2R)-3-phospho-glyceroyl phosphate + NADPH + H(+). It carries out the reaction D-glyceraldehyde 3-phosphate + phosphate + NAD(+) = (2R)-3-phospho-glyceroyl phosphate + NADH + H(+). It participates in carbohydrate degradation; glycolysis; pyruvate from D-glyceraldehyde 3-phosphate: step 1/5. This Methanosarcina acetivorans (strain ATCC 35395 / DSM 2834 / JCM 12185 / C2A) protein is Glyceraldehyde-3-phosphate dehydrogenase 1 (gapA).